Here is a 677-residue protein sequence, read N- to C-terminus: WD and tetratricopeptide repeats protein 1 (677 aa).

WD repeat units follow at residues 45 to 84 (GHSGCVNCLEWNEKGDLLASGSDDQHTIVWDPLHHKKLLS), 88 to 129 (GHTA…TIHM), 132 to 172 (DHTN…KHSE), 182 to 222 (GQLV…NHRK), and 265 to 305 (RLRV…RPYT). The residue at position 353 (Ser-353) is a Phosphoserine. TPR repeat units follow at residues 362 to 395 (LERVKQQANEAFACQQWTQAIQLYSKAVQRAPHN) and 397 to 432 (MLYGNRAAAYMKRKWDGDHYDALRDCLKAISLNPCH). Residues 487–509 (NDGEEKKGPGGGAPVRLRSTSRK) form a disordered region. Ser-511 carries the post-translational modification Phosphoserine. WD repeat units lie at residues 535–575 (NTTT…LVRV) and 578–617 (GDESIVNCLQPHPSYCFLATSGIDPVVRLWNPRPESEDLT). Residues 655–677 (SSGGAGASDDEDSSEGQVQCRPS) form a disordered region.

The protein operates within protein modification; protein ubiquitination. Functionally, may function as a substrate receptor for CUL4-DDB1 E3 ubiquitin-protein ligase complex. This Homo sapiens (Human) protein is WD and tetratricopeptide repeats protein 1 (WDTC1).